We begin with the raw amino-acid sequence, 410 residues long: MRYLLSAPSQIKATIQLPASKSISNRALIIHALSKGDDVPSNLSDCDDTQVMIKALTEGNEVIDILAAGTAMRFLTAYLSSTPGIHTITGTERMQQRPIQILVNALRELGAHIEYVRNEGFPPLRIEGRELTGSEITLKGNVSSQYISALLMIGPVLKNGLQLRLTGEIVSRPYINLTLQLMKDFGASASWTSDQNIQVDPQPYHCLPFTVESDWSAASYWYQIAALSPQADIELTGLFRHSYQGDSRGAEVFARLGVATEYTETGIRLKKNGTCVERLDEDFVDIPDLAQTFVVTCALLNVPFRFTGLQSLKIKETDRIEALKTEMKKLGYILHDKNDSILSWDGERVEQQTCPVIKTYEDHRMAMAFAPAAIHYPTIQIDEPQVVSKSYPGYWDDLRKAGFGIKVGEE.

Residues K21, S22, and R26 each contribute to the 3-phosphoshikimate site. Position 21 (K21) interacts with phosphoenolpyruvate. The phosphoenolpyruvate site is built by G69 and R97. 3-phosphoshikimate contacts are provided by S143, S144, Q145, S171, D288, and K315. Residue Q145 coordinates phosphoenolpyruvate. The Proton acceptor role is filled by D288. Phosphoenolpyruvate contacts are provided by R319, R364, and K389.

It belongs to the EPSP synthase family. In terms of assembly, monomer.

The protein localises to the cytoplasm. It carries out the reaction 3-phosphoshikimate + phosphoenolpyruvate = 5-O-(1-carboxyvinyl)-3-phosphoshikimate + phosphate. It functions in the pathway metabolic intermediate biosynthesis; chorismate biosynthesis; chorismate from D-erythrose 4-phosphate and phosphoenolpyruvate: step 6/7. In terms of biological role, catalyzes the transfer of the enolpyruvyl moiety of phosphoenolpyruvate (PEP) to the 5-hydroxyl of shikimate-3-phosphate (S3P) to produce enolpyruvyl shikimate-3-phosphate and inorganic phosphate. This is 3-phosphoshikimate 1-carboxyvinyltransferase from Bacteroides fragilis (strain ATCC 25285 / DSM 2151 / CCUG 4856 / JCM 11019 / LMG 10263 / NCTC 9343 / Onslow / VPI 2553 / EN-2).